The chain runs to 261 residues: MRFLILFLALSLGGIDAAPPLQSRVVGGFNCEKNSQPWQVAVYDNKEHICGGVLLERNWVLTAAHCYVDQYEVWLGKNKLFQEEPSAQHRLVSKSFPHPGFNMSLLTLKEIPPGADFSNDLMLLRLSKPADITDAVKPITLPTKESKLGSTCLASGWGSITPTKWQKPDDLQCVFLKLLPIKNCIENHNVKVTDVMLCAGEMSGGKNICKGDSGGPLICDSVLQGITSTGPIPCGKPGVPAMYTNLIKFNSWIKDTMTKNS.

The N-terminal stretch at 1–18 (MRFLILFLALSLGGIDAA) is a signal peptide. The propeptide at 19–24 (PPLQSR) is activation peptide. The 234-residue stretch at 25–258 (VVGGFNCEKN…FNSWIKDTMT (234 aa)) folds into the Peptidase S1 domain. Cystine bridges form between Cys31–Cys173, Cys50–Cys66, Cys152–Cys219, Cys184–Cys198, and Cys209–Cys234. The active-site Charge relay system is the His65. A glycan (N-linked (GlcNAc...) asparagine) is linked at Asn102. Catalysis depends on Asp120, which acts as the Charge relay system. Ser213 serves as the catalytic Charge relay system.

Belongs to the peptidase S1 family. Kallikrein subfamily.

The catalysed reaction is Preferential cleavage of Arg-|-Xaa bonds in small molecule substrates. Highly selective action to release kallidin (lysyl-bradykinin) from kininogen involves hydrolysis of Met-|-Xaa or Leu-|-Xaa.. Functionally, glandular kallikreins cleave Met-Lys and Arg-Ser bonds in kininogen to release Lys-bradykinin. The protein is Kallikrein 1-related peptidase b8 (Klk1b8) of Mus musculus (Mouse).